The primary structure comprises 74 residues: Large ribosomal subunit protein bL31 (74 aa).

The protein belongs to the bacterial ribosomal protein bL31 family. Type A subfamily. In terms of assembly, part of the 50S ribosomal subunit.

In terms of biological role, binds the 23S rRNA. The protein is Large ribosomal subunit protein bL31 of Xanthobacter autotrophicus (strain ATCC BAA-1158 / Py2).